The primary structure comprises 277 residues: MQVFQVKEVHSQADAVLEGATQHSVYHPDSLHQPQSDWLAEEVPVALVYNGISHVVMMASPKELEQFALGFSLSEGIIQSPADIYGIDVQNACNGIEVQIELSSRRFAGLKERRRSMDGRTGCGVCGVEQLAEIGKPVAPLPFTQTFSLSKLENALVRLRDVQKIGQVTGCTHAASWIAPDGTLSGGSEDVGRHVALDKLLGARAKQGWQQGAALVSSRASYEMVQKSAMCGVEILFAVSAATSLAVDVAQRCNLTLVGFCRPGQATIYTHPQRLSE.

Catalysis depends on Cys123, which acts as the Cysteine persulfide intermediate.

The protein belongs to the FdhD family.

The protein localises to the cytoplasm. Functionally, required for formate dehydrogenase (FDH) activity. Acts as a sulfur carrier protein that transfers sulfur from IscS to the molybdenum cofactor prior to its insertion into FDH. The protein is Sulfur carrier protein FdhD of Pectobacterium atrosepticum (strain SCRI 1043 / ATCC BAA-672) (Erwinia carotovora subsp. atroseptica).